Consider the following 477-residue polypeptide: V-type ATP synthase beta chain (477 aa).

This sequence belongs to the ATPase alpha/beta chains family.

Its function is as follows. Produces ATP from ADP in the presence of a proton gradient across the membrane. The V-type beta chain is a regulatory subunit. This chain is V-type ATP synthase beta chain, found in Anaeromyxobacter dehalogenans (strain 2CP-1 / ATCC BAA-258).